The sequence spans 65 residues: DNA-directed RNA polymerase subunit omega (65 aa).

This sequence belongs to the RNA polymerase subunit omega family. The RNAP catalytic core consists of 2 alpha, 1 beta, 1 beta' and 1 omega subunit. When a sigma factor is associated with the core the holoenzyme is formed, which can initiate transcription.

It catalyses the reaction RNA(n) + a ribonucleoside 5'-triphosphate = RNA(n+1) + diphosphate. Its function is as follows. Promotes RNA polymerase assembly. Latches the N- and C-terminal regions of the beta' subunit thereby facilitating its interaction with the beta and alpha subunits. The protein is DNA-directed RNA polymerase subunit omega of Finegoldia magna (strain ATCC 29328 / DSM 20472 / WAL 2508) (Peptostreptococcus magnus).